A 491-amino-acid chain; its full sequence is Cytosolic Fe-S cluster assembly factor NAR1 (491 aa).

C20, C59, C62, C65, C177, C231, C412, and C416 together coordinate [4Fe-4S] cluster.

The protein belongs to the NARF family. As to quaternary structure, interacts with CIA1.

Functionally, component of the cytosolic Fe/S protein assembly machinery. Required for maturation of extramitochondrial Fe/S proteins. May play a role in the transfer of pre-assembled Fe/S clusters to target apoproteins. In Saccharomyces cerevisiae (strain YJM789) (Baker's yeast), this protein is Cytosolic Fe-S cluster assembly factor NAR1 (NAR1).